The following is a 136-amino-acid chain: Large ribosomal subunit protein uL22 (136 aa).

The protein belongs to the universal ribosomal protein uL22 family. As to quaternary structure, part of the 50S ribosomal subunit.

This protein binds specifically to 23S rRNA; its binding is stimulated by other ribosomal proteins, e.g. L4, L17, and L20. It is important during the early stages of 50S assembly. It makes multiple contacts with different domains of the 23S rRNA in the assembled 50S subunit and ribosome. Its function is as follows. The globular domain of the protein is located near the polypeptide exit tunnel on the outside of the subunit, while an extended beta-hairpin is found that lines the wall of the exit tunnel in the center of the 70S ribosome. The chain is Large ribosomal subunit protein uL22 from Bacteroides thetaiotaomicron (strain ATCC 29148 / DSM 2079 / JCM 5827 / CCUG 10774 / NCTC 10582 / VPI-5482 / E50).